The sequence spans 60 residues: UPF0434 protein Mfla_2088 (60 aa).

The protein belongs to the UPF0434 family.

The chain is UPF0434 protein Mfla_2088 from Methylobacillus flagellatus (strain ATCC 51484 / DSM 6875 / VKM B-1610 / KT).